The chain runs to 1286 residues: DNA-directed RNA polymerase 147 kDa polypeptide (1286 aa).

This sequence belongs to the poxviridae DNA-directed RNA polymerase 147 kDa subunit family. The DNA-dependent RNA polymerase used for intermediate and late genes expression consists of eight subunits Rpo30/OPG66, Rpo7/OPG90, Rpo22/OPG103, Rpo147/OPG105, Rpo18/OPG119, Rpo19/OPG131, Rpo132/OPG151 and Rpo35/OPG156. The same holoenzyme, with the addition of the transcription-specificity factor OPG109, is used for early gene expression.

Its subcellular location is the virion. The enzyme catalyses RNA(n) + a ribonucleoside 5'-triphosphate = RNA(n+1) + diphosphate. In terms of biological role, part of the DNA-dependent RNA polymerase which catalyzes the transcription of viral DNA into RNA using the four ribonucleoside triphosphates as substrates. Responsible for the transcription of early, intermediate and late genes. DNA-dependent RNA polymerase associates with the early transcription factor (ETF), itself composed of OPG118 and OPG133, thereby allowing the early genes transcription. Late transcription, and probably also intermediate transcription, require newly synthesized RNA polymerase. This is DNA-directed RNA polymerase 147 kDa polypeptide (OPG105) from Variola virus (isolate Human/India/Ind3/1967) (VARV).